Here is a 242-residue protein sequence, read N- to C-terminus: MSGFFITATDTEVGKTVVAGALAGVFRELGYNIGVYKALQSGHVASNPEGDAARLKVLSGVPIKEDEICPYSIEEPLAPRLAMKRAGRAVTLKDIIHHYNERLKEFNSLFVEGAGGLAVPYTEDALVIDFAKELQLPLIVVARPTLGTVNHTVLTIAYAKAHGLTVAGVILSGCKECEMERVQENKVMIEELSGVPVLGLLPFFEGEFTKEEVLESAKEYIMISKLEEFIRNESTVAHTSSN.

12 to 17 (EVGKTV) is an ATP binding site. Thr16 contacts Mg(2+). Lys37 is an active-site residue. Ser41 is a binding site for substrate. ATP-binding positions include Asp51 and 112-115 (EGAG). Mg(2+) is bound by residues Asp51 and Glu112.

This sequence belongs to the dethiobiotin synthetase family. Homodimer. It depends on Mg(2+) as a cofactor.

The protein localises to the cytoplasm. It catalyses the reaction (7R,8S)-7,8-diammoniononanoate + CO2 + ATP = (4R,5S)-dethiobiotin + ADP + phosphate + 3 H(+). Its pathway is cofactor biosynthesis; biotin biosynthesis; biotin from 7,8-diaminononanoate: step 1/2. In terms of biological role, catalyzes a mechanistically unusual reaction, the ATP-dependent insertion of CO2 between the N7 and N8 nitrogen atoms of 7,8-diaminopelargonic acid (DAPA, also called 7,8-diammoniononanoate) to form a ureido ring. The chain is ATP-dependent dethiobiotin synthetase BioD from Bacillus anthracis (strain A0248).